Reading from the N-terminus, the 180-residue chain is Protein GrpE (180 aa).

It belongs to the GrpE family. Homodimer.

Its subcellular location is the cytoplasm. In terms of biological role, participates actively in the response to hyperosmotic and heat shock by preventing the aggregation of stress-denatured proteins, in association with DnaK and GrpE. It is the nucleotide exchange factor for DnaK and may function as a thermosensor. Unfolded proteins bind initially to DnaJ; upon interaction with the DnaJ-bound protein, DnaK hydrolyzes its bound ATP, resulting in the formation of a stable complex. GrpE releases ADP from DnaK; ATP binding to DnaK triggers the release of the substrate protein, thus completing the reaction cycle. Several rounds of ATP-dependent interactions between DnaJ, DnaK and GrpE are required for fully efficient folding. The polypeptide is Protein GrpE (Picrophilus torridus (strain ATCC 700027 / DSM 9790 / JCM 10055 / NBRC 100828 / KAW 2/3)).